The chain runs to 35 residues: uncharacterized protein (35 aa).

This is an uncharacterized protein from Archaeoglobus fulgidus (strain ATCC 49558 / DSM 4304 / JCM 9628 / NBRC 100126 / VC-16).